We begin with the raw amino-acid sequence, 258 residues long: Small ribosomal subunit protein uS2 (258 aa).

The segment at Glu-234–Gln-258 is disordered. Residues Ala-236–Gln-258 show a composition bias toward low complexity.

It belongs to the universal ribosomal protein uS2 family.

This Desulfovibrio desulfuricans (strain ATCC 27774 / DSM 6949 / MB) protein is Small ribosomal subunit protein uS2.